A 397-amino-acid chain; its full sequence is Na(+)/H(+) antiporter NhaA 3 (397 aa).

11 helical membrane-spanning segments follow: residues 18 to 38 (AGGI…NSPF), 63 to 83 (LLLW…GLEL), 98 to 118 (IALP…IYWW), 129 to 149 (GWAI…ALLG), 158 to 178 (IFLT…IAFF), 181 to 201 (SKIS…LFIC), 207 to 224 (TTLR…VALL), 269 to 289 (VAFL…FIGM), 306 to 326 (LFFG…LFGW), 340 to 360 (GVAV…SLAF), and 373 to 393 (LGIV…LRSA).

This sequence belongs to the NhaA Na(+)/H(+) (TC 2.A.33) antiporter family.

The protein localises to the cell inner membrane. It carries out the reaction Na(+)(in) + 2 H(+)(out) = Na(+)(out) + 2 H(+)(in). Its function is as follows. Na(+)/H(+) antiporter that extrudes sodium in exchange for external protons. The protein is Na(+)/H(+) antiporter NhaA 3 of Saccharophagus degradans (strain 2-40 / ATCC 43961 / DSM 17024).